Consider the following 181-residue polypeptide: ATP-dependent protease subunit HslV (181 aa).

Thr9 is a catalytic residue. Residues Ala166, Cys169, and Thr172 each contribute to the Na(+) site.

Belongs to the peptidase T1B family. HslV subfamily. A double ring-shaped homohexamer of HslV is capped on each side by a ring-shaped HslU homohexamer. The assembly of the HslU/HslV complex is dependent on binding of ATP.

It is found in the cytoplasm. It catalyses the reaction ATP-dependent cleavage of peptide bonds with broad specificity.. Its activity is regulated as follows. Allosterically activated by HslU binding. Its function is as follows. Protease subunit of a proteasome-like degradation complex believed to be a general protein degrading machinery. The sequence is that of ATP-dependent protease subunit HslV from Staphylococcus aureus (strain bovine RF122 / ET3-1).